A 395-amino-acid chain; its full sequence is Abhydrolase domain-containing protein (395 aa).

Residues 117–331 (PTIVINHGLT…INAIDDPIAP (215 aa)) form the AB hydrolase-1 domain. Catalysis depends on charge relay system residues Ser200, Asp327, and His356.

The protein belongs to the AB hydrolase superfamily. AB hydrolase 4 family.

This chain is Abhydrolase domain-containing protein (abhd), found in Dictyostelium discoideum (Social amoeba).